The primary structure comprises 254 residues: Anamorsin homolog (254 aa).

The segment at 4 to 132 is N-terminal SAM-like domain; that stretch reads VQENNHVLYI…EIGSAAKLSL (129 aa). Residues 132–167 form a linker region; sequence LGGNKAKVAAVWKLDVDDDDDERIDEDELLDEEDKV. [2Fe-2S] cluster is bound by residues cysteine 177, cysteine 186, cysteine 189, and cysteine 191. Residues 177–191 are fe-S binding site A; it reads CGTTGKRKACKDCSC. [4Fe-4S] cluster-binding residues include cysteine 215, cysteine 218, cysteine 226, and cysteine 229. 2 short sequence motifs (cx2C motif) span residues 215–218 and 226–229; these read CGSC and CATC. The fe-S binding site B stretch occupies residues 215 to 229; the sequence is CGSCYLGDAFRCATC.

The protein belongs to the anamorsin family. As to quaternary structure, monomer. [2Fe-2S] cluster is required as a cofactor. Requires [4Fe-4S] cluster as cofactor.

It localises to the cytoplasm. The protein localises to the mitochondrion intermembrane space. Its function is as follows. Component of the cytosolic iron-sulfur (Fe-S) protein assembly (CIA) machinery. Required for the maturation of extramitochondrial Fe-S proteins. Part of an electron transfer chain functioning in an early step of cytosolic Fe-S biogenesis, facilitating the de novo assembly of a [4Fe-4S] cluster on the cytosolic Fe-S scaffold complex. Electrons are transferred from NADPH via a FAD- and FMN-containing diflavin oxidoreductase. Together with the diflavin oxidoreductase, also required for the assembly of the diferric tyrosyl radical cofactor of ribonucleotide reductase (RNR), probably by providing electrons for reduction during radical cofactor maturation in the catalytic small subunit. This chain is Anamorsin homolog, found in Aedes aegypti (Yellowfever mosquito).